The chain runs to 475 residues: MDTETIASAVLNEEQLSLDLIEAQYALMNTRDQSNAKSLVILVSGIELAGKGEAVKQLREWVDPRFLYVKADPPHLFNLKQPFWQPYTRFVPAEGQIMVWFGNWYGDLLATAMHASKPLDDTLFDEYVSNMRAFEQDLKNNNVDVLKVWFDLSWKSLQKRLDDMDPSEVHWHKLHGLDWRNKKQYDTLQKLRTRFTDDWQIIDGEDEDLRNHNFAQAILTALRHCPEHEKKAALKWQQAPIPDILTQFEVPQAEDANYKSELKKLTKQVADAMRCDDRKVVIAFEGMDAAGKGGAIKRIVKKLDPREYEIHTIAAPEKYELRRPYLWRFWSKLQSDDITIFDRTWYGRVLVERVEGFATEVEWQRAYAEINRFEKNLSSSQTVLIKFWLAIDKDEQAARFKARESTPHKRFKITEEDWRNRDKWDDYLKAAADMFAHTDTSYAPWYIISTNDKQQARIEVLRAILKQLKADRDTD.

PPK2 regions lie at residues 18-222 (LDLI…LTAL) and 256-472 (ANYK…KADR).

The protein belongs to the polyphosphate kinase 2 (PPK2) family. Class II subfamily. In terms of assembly, homodimer and homotetramer. Mg(2+) serves as cofactor.

It carries out the reaction [phosphate](n) + ADP = [phosphate](n+1) + AMP. Its function is as follows. Uses inorganic polyphosphate (polyP) as a donor to convert AMP to ADP. Can also use GMP, UMP, CMP, TMP or deoxyribonucleoside monophosphates, with lower efficiency. Cannot use low-molecular weight polyP as donors. Can also catalyze the synthesis of polyP from ADP or GDP, with lower efficiency. The protein is Polyphosphate:AMP phosphotransferase of Acinetobacter johnsonii.